A 1262-amino-acid polypeptide reads, in one-letter code: Tau-tubulin kinase homolog Asator (1262 aa).

The tract at residues 13 to 35 (NASAPDDGNQSCQPSSKQDQYLS) is disordered. The span at 20–35 (GNQSCQPSSKQDQYLS) shows a compositional bias: polar residues. A Protein kinase domain is found at 173-436 (WKVVRKIGGG…MLIGLFERCM (264 aa)). ATP-binding positions include 179–187 (IGGGGFGEI) and K202. The Proton acceptor role is filled by D293. Disordered regions lie at residues 662–724 (TVTN…TSNA), 755–792 (RSATSTNLRPSSSASQRINSGSTIGGAVGNGSNTARSS), and 984–1003 (KDSALQLNSTNDSLDKSRHR). Basic and acidic residues predominate over residues 667–679 (KTSEVNRSTEEQK). The span at 755–776 (RSATSTNLRPSSSASQRINSGS) shows a compositional bias: polar residues.

The protein belongs to the protein kinase superfamily. CK1 Ser/Thr protein kinase family. As to quaternary structure, interacts with Mgtor. It depends on Mg(2+) as a cofactor. Detected in larval brain.

It localises to the cytoplasm. It is found in the cytoskeleton. Its subcellular location is the spindle. The catalysed reaction is L-seryl-[protein] + ATP = O-phospho-L-seryl-[protein] + ADP + H(+). It catalyses the reaction L-threonyl-[protein] + ATP = O-phospho-L-threonyl-[protein] + ADP + H(+). Functionally, probable serine/threonine protein kinase. In Drosophila melanogaster (Fruit fly), this protein is Tau-tubulin kinase homolog Asator.